Here is a 419-residue protein sequence, read N- to C-terminus: LWamide neuropeptides (419 aa).

The signal sequence occupies residues 1 to 27 (MEKEMRNLMLLVLLTVILDNGIGKCNA). The interval 27–48 (AKSEEDQDGNARNNRIDKNDDN) is disordered. Positions 28–104 (KSEEDQDGNA…ENLDIDSTVQ (77 aa)) are excised as a propeptide. The residue at position 110 (Trp110) is a Tryptophan amide. The propeptide occupies 113 to 140 (EADFDNTRAHDSAQISDEKQSGLWVGDA). Residues 120 to 132 (RAHDSAQISDEKQ) are compositionally biased toward basic and acidic residues. The disordered stretch occupies residues 120 to 332 (RAHDSAQISD…PGLWGRQVED (213 aa)). Tryptophan amide is present on Trp146. A propeptide spanning residues 149–150 (DA) is cleaved from the precursor. Trp156 carries the post-translational modification Tryptophan amide. The propeptide occupies 159 to 160 (DA). Trp166 carries the tryptophan amide modification. A propeptide spanning residues 169–170 (DA) is cleaved from the precursor. Trp176 carries the post-translational modification Tryptophan amide. Residues 179–180 (DA) constitute a propeptide that is removed on maturation. Trp186 bears the Tryptophan amide mark. Positions 189 to 190 (DA) are excised as a propeptide. The residue at position 196 (Trp196) is a Tryptophan amide. The propeptide occupies 199 to 200 (DA). Trp206 is modified (tryptophan amide). The propeptide occupies 209–210 (DA). Trp216 carries the tryptophan amide modification. A propeptide spans 218-220 (GDA) (seems to have a sequencing error or a mutation in position 218; Gly instead of Arg). Position 226 is a tryptophan amide (Trp226). Residues 229 to 230 (DA) constitute a propeptide that is removed on maturation. Position 236 is a tryptophan amide (Trp236). Positions 239–240 (DA) are excised as a propeptide. Trp246 carries the post-translational modification Tryptophan amide. A propeptide spanning residues 249 to 250 (DA) is cleaved from the precursor. Tryptophan amide is present on Trp256. Residues 259–260 (DA) constitute a propeptide that is removed on maturation. Trp266 is modified (tryptophan amide). A propeptide spanning residues 269–270 (DA) is cleaved from the precursor. At Trp276 the chain carries Tryptophan amide. A propeptide spanning residues 279 to 280 (DT) is cleaved from the precursor. Trp286 carries the post-translational modification Tryptophan amide. Positions 289–290 (DA) are excised as a propeptide. At Trp296 the chain carries Tryptophan amide. Propeptides lie at residues 299–300 (DA) and 309–320 (DNNVIKSRSDDA). Trp326 is subject to Tryptophan amide. A propeptide spanning residues 329 to 419 (QVEDGPTKIW…RRNNKKNNKF (91 aa)) is cleaved from the precursor.

Belongs to the LWamide neuropeptide family. As to expression, in planula larvae, expressed in a narrow ring of ectodermal neurosensory cells around the widest circumference at the anterior of the larvae. In primary polyps, expression is confined to endodermal cells of the hypostome. In mature polyps, expression is strong in the epidermis from the tentacle level to the base of the polyp and weak in the gastrodermal cells in the apical hypostome.

It localises to the secreted. LWamide peptides may be involved in induction of metamorphosis. The polypeptide is LWamide neuropeptides (Hydractinia echinata (Snail fur)).